A 511-amino-acid chain; its full sequence is MLVTIVASIACFIVGGILSYVLFKYGLKAKYDNVLKEAETEAEVIKKNKLLEVKEKFLNKKADLEKEVALRNQKIQQAENKLKQREMVLSQRQEEIQRKRAEADAVRENLEAQLGIVDKKKEELDKLQHQEIEKLEALSGLSADEAKERLVESLKEEAKTQAQSYINDIMDDAKLTASKEAKRIVIQSIQRVATETAIENSVTVFHIESDEIKGRIIGREGRNIRALEAATGVEIVVDDTPEAIVLSAFDPVRREIARLALHQLVTDGRIHPARIEEVVAKVRKQVEEEIIETGKRTTIDLGIHGLHPELIRIIGKMKYRSSYGQNLLQHARETANLCAVMASELGLNPKKAKRAGLLHDIGKVPDEEPELPHALLGMKLAEKFKEKPDICNAIGAHHDEIEMTSLLAPIVQVCDAISGARPGARREIVEAYIKRLNDLEQLAMSYPGVTKTYAIQAGRELRVIVGADKIDDKQTENLSGEIAKKIQDEMTYPGQVKITVIRETRAVSFAK.

A helical membrane pass occupies residues 3-23; that stretch reads VTIVASIACFIVGGILSYVLF. Positions 201 to 261 constitute a KH domain; the sequence is SVTVFHIESD…VRREIARLAL (61 aa). In terms of domain architecture, HD spans 327 to 420; it reads LLQHARETAN…VQVCDAISGA (94 aa).

It belongs to the RNase Y family.

The protein resides in the cell membrane. Endoribonuclease that initiates mRNA decay. This chain is Ribonuclease Y, found in Bacteroides fragilis (strain ATCC 25285 / DSM 2151 / CCUG 4856 / JCM 11019 / LMG 10263 / NCTC 9343 / Onslow / VPI 2553 / EN-2).